Consider the following 119-residue polypeptide: uncharacterized protein (119 aa).

The segment at 1–22 (MQGQAGKRKTDGKVPSNTEQNC) is disordered.

This is an uncharacterized protein from Saccharomyces cerevisiae (strain ATCC 204508 / S288c) (Baker's yeast).